We begin with the raw amino-acid sequence, 310 residues long: Vomeronasal type-1 receptor 101 (310 aa).

The Extracellular segment spans residues 1–19; that stretch reads MNKVNILPSDTNMKITLFS. The chain crosses the membrane as a helical span at residues 20 to 40; that stretch reads ELSVGISANSILFFAHLCMFF. Residues 41-49 are Cytoplasmic-facing; that stretch reads EENRSKPID. Residues 50–70 traverse the membrane as a helical segment; sequence LCIAFLSLTQLMLLVTMGLIA. Topologically, residues 71–93 are extracellular; sequence ADMFMAQGIWDITTCRSLIYFHR. Cys85 and Cys172 are oxidised to a cystine. The helical transmembrane segment at 94 to 114 threads the bilayer; that stretch reads LLRGFNLCAACLLHILWTFTL. The Cytoplasmic segment spans residues 115–134; the sequence is SPRSSCLTKFKHKSPHHISG. Residues 135 to 155 form a helical membrane-spanning segment; the sequence is AYLFFCVLYMSFSSHLFVLVI. Over 156–193 the chain is Extracellular; sequence ATSNLTSDHFMYVTQSCSLLPMSYSRTSTFSLLMVTRE. The N-linked (GlcNAc...) asparagine glycan is linked to Asn159. A helical membrane pass occupies residues 194-214; the sequence is VFLISLMALSSGYMVTLLWRH. The Cytoplasmic portion of the chain corresponds to 215 to 238; that stretch reads KKQAQHLHSTRLSSKASPQQRATR. Residues 239 to 259 form a helical membrane-spanning segment; sequence TILLLMTFFVVFYILGTVIFH. Residues 260-268 lie on the Extracellular side of the membrane; that stretch reads SRTKFKDGS. The helical transmembrane segment at 269–289 threads the bilayer; sequence IFYCVQIIVSHSYATISPFVF. At 290–310 the chain is on the cytoplasmic side; it reads VFSEKRIIKFFRSMCGRIVNT.

The protein belongs to the G-protein coupled receptor 1 family. In terms of tissue distribution, expressed in 1-4% of neurons of the vomeronasal organ. Only one pheromone receptor gene may be expressed in a particular neuron. Not expressed in the main olfactory epithelium.

Its subcellular location is the cell membrane. Putative pheromone receptor implicated in the regulation of social as well as reproductive behavior. This is Vomeronasal type-1 receptor 101 (Vom1r101) from Rattus norvegicus (Rat).